A 505-amino-acid polypeptide reads, in one-letter code: 6-phosphofructo-2-kinase/fructose-2,6-bisphosphatase 2 (505 aa).

The tract at residues 1 to 20 is disordered; sequence MSGASSSEQNNNSYETKTPN. S2 is modified (N-acetylserine). The segment at 2–248 is 6-phosphofructo-2-kinase; sequence SGASSSEQNN…VYYLMNIHVQ (247 aa). Phosphoserine; by PKA is present on S29. 45–53 serves as a coordination point for ATP; it reads GLPARGKTY. Residues R78 and R102 each contribute to the beta-D-fructose 6-phosphate site. D128 is an active-site residue. Beta-D-fructose 6-phosphate contacts are provided by T130 and R136. C158 is a catalytic residue. 167 to 172 contributes to the ATP binding site; sequence NILEVK. 3 residues coordinate beta-D-fructose 6-phosphate: K172, R193, and Y197. Positions 249-505 are fructose-2,6-bisphosphatase; it reads PRTIYLCRHG…RAQDMQEGAD (257 aa). Beta-D-fructose 2,6-bisphosphate is bound at residue R256. H257 functions as the Tele-phosphohistidine intermediate in the catalytic mechanism. Beta-D-fructose 2,6-bisphosphate contacts are provided by N263 and G269. Residue E326 is the Proton donor/acceptor of the active site. Beta-D-fructose 2,6-bisphosphate is bound by residues Y337, R351, K355, Y366, Q392, and R396. An ATP-binding site is contributed by 348–351; the sequence is FALR. ATP contacts are provided by residues 392–396 and Y428; that span reads QAVMR. The disordered stretch occupies residues 445 to 505; that stretch reads HRDKPTNNFP…RAQDMQEGAD (61 aa). Polar residues predominate over residues 450-476; that stretch reads TNNFPKNQTPVRMRRNSFTPLSSSNTI. S466 is modified (phosphoserine; by AMPK). T468 and T475 each carry phosphothreonine. S483 carries the post-translational modification Phosphoserine; by BRAF. 2 positions are modified to phosphoserine: S486 and S493.

The protein in the C-terminal section; belongs to the phosphoglycerate mutase family. Homodimer. Forms a heterodimer with PFKFB3. In terms of processing, phosphorylation by AMPK stimulates activity. Heart.

The enzyme catalyses beta-D-fructose 2,6-bisphosphate + H2O = beta-D-fructose 6-phosphate + phosphate. The catalysed reaction is beta-D-fructose 6-phosphate + ATP = beta-D-fructose 2,6-bisphosphate + ADP + H(+). Its activity is regulated as follows. Phosphorylation results in the activation of the kinase activity. Its function is as follows. Synthesis and degradation of fructose 2,6-bisphosphate. In Homo sapiens (Human), this protein is 6-phosphofructo-2-kinase/fructose-2,6-bisphosphatase 2.